Reading from the N-terminus, the 221-residue chain is NIP3 homolog (221 aa).

Residues 24–55 are disordered; that stretch reads GEKTDESVQPQQQTEQSSAQQTTPSAKAVSNP. Lysine 26 participates in a covalent cross-link: Glycyl lysine isopeptide (Lys-Gly) (interchain with G-Cter in ubiquitin). Low complexity predominate over residues 32–49; it reads QPQQQTEQSSAQQTTPSA. A helical membrane pass occupies residues 189 to 209; sequence VVFGFLVTNIFSFVVGAAVGF. The tract at residues 189-209 is required for initiation of apoptosis; that stretch reads VVFGFLVTNIFSFVVGAAVGF.

It belongs to the NIP3 family. In terms of assembly, homodimer; via transmembrane domain. Interacts with ced-3 and ced-9. In terms of processing, ubiquitinated and degraded by the proteasome. Under oxidative stress conditions, ubiquitinated at Lys-26 in a pink-1 dependent manner. Colocalizes with pdr-1 and may be ubiquitinated by it. Expressed in all somatic tissues including neurons, pharynx, intestine, body wall muscles and vulva muscles.

It is found in the mitochondrion outer membrane. In terms of biological role, initiates apoptosis in a BH3-independent mechanism possibly by recruiting ced-3 to mitochondria and other cytoplasmic membranes. Has a role in lifespan and tumor growth. Required for the induction of mitophagy under stress conditions. This Caenorhabditis elegans protein is NIP3 homolog.